An 82-amino-acid polypeptide reads, in one-letter code: Protein ImpC (82 aa).

Belongs to the DinI family.

In terms of biological role, the imp operon is involved in UV protection and mutation, however the ImpC protein is not essential for these functions. In Salmonella typhimurium, this protein is Protein ImpC (impC).